The following is a 502-amino-acid chain: MSKTLKIIQKKKSLEKELYTRKKKLKKLKKLGFNFPNTFHYIHTIKEIKKLYNNYTKKELEKINYKTKISGRIVNKRTFGKALFFVIRNNNHDIQIYIKSNYFPKNYYQKNILELDLGDIIGVKGKIFKTNTCELSILCKKIYLLTKSLRSLPDKYFGLKNQEIKYRKRYLDLISNNKIIKIFQKRSLIISNIRSFMKQKKFLEVETPMLHPIPGGANAKPFITYHNSLNEKMYLRIAPELYLKKLIIGGFNKIFEINRNFRNEGISTKHNPEFTMMEIYMSYSNYIDIMNLLEELCIFLVKKISKSLIIMYKSKKINFKKPIKKMTMIESILKFNKNIDISNFKNIKNIKKTATNLNIKIDSNASLGEITNLIFEKTTEKKIIQPTFITEYPIEISPLAKEKNKYFAERFEFFIAGYEIANGFSELNDPEEQKKRFKLQISKKNYTDKSKNFSYDKDYIIALEHGLPPTSGLGVGIDRLIMILTNQKTIKDIIFFPLLKKI.

Positions 412 and 419 each coordinate Mg(2+).

This sequence belongs to the class-II aminoacyl-tRNA synthetase family. Homodimer. The cofactor is Mg(2+).

It localises to the cytoplasm. The enzyme catalyses tRNA(Lys) + L-lysine + ATP = L-lysyl-tRNA(Lys) + AMP + diphosphate. This Buchnera aphidicola subsp. Cinara cedri (strain Cc) protein is Lysine--tRNA ligase.